The following is a 321-amino-acid chain: Outer envelope protein 36, chloroplastic (321 aa).

The protein belongs to the OEP80 (TC 1.B.33.2) family. In terms of tissue distribution, expressed in germinating seeds.

The protein localises to the plastid. It localises to the chloroplast outer membrane. May play a role during plastid development. The chain is Outer envelope protein 36, chloroplastic from Arabidopsis thaliana (Mouse-ear cress).